Here is a 131-residue protein sequence, read N- to C-terminus: Large ribosomal subunit protein bL12 (131 aa).

This sequence belongs to the bacterial ribosomal protein bL12 family. Homodimer. Part of the ribosomal stalk of the 50S ribosomal subunit. Forms a multimeric L10(L12)X complex, where L10 forms an elongated spine to which 2 to 4 L12 dimers bind in a sequential fashion. Binds GTP-bound translation factors.

In terms of biological role, forms part of the ribosomal stalk which helps the ribosome interact with GTP-bound translation factors. Is thus essential for accurate translation. This Prochlorococcus marinus (strain MIT 9515) protein is Large ribosomal subunit protein bL12.